A 144-amino-acid polypeptide reads, in one-letter code: Large ribosomal subunit protein uL13 (144 aa).

It belongs to the universal ribosomal protein uL13 family. Part of the 50S ribosomal subunit.

In terms of biological role, this protein is one of the early assembly proteins of the 50S ribosomal subunit, although it is not seen to bind rRNA by itself. It is important during the early stages of 50S assembly. The sequence is that of Large ribosomal subunit protein uL13 from Nitratidesulfovibrio vulgaris (strain DSM 19637 / Miyazaki F) (Desulfovibrio vulgaris).